A 724-amino-acid chain; its full sequence is Ribosomal RNA large subunit methyltransferase K/L (724 aa).

A THUMP domain is found at D42–L153.

The protein belongs to the methyltransferase superfamily. RlmKL family.

It is found in the cytoplasm. It carries out the reaction guanosine(2445) in 23S rRNA + S-adenosyl-L-methionine = N(2)-methylguanosine(2445) in 23S rRNA + S-adenosyl-L-homocysteine + H(+). The enzyme catalyses guanosine(2069) in 23S rRNA + S-adenosyl-L-methionine = N(2)-methylguanosine(2069) in 23S rRNA + S-adenosyl-L-homocysteine + H(+). In terms of biological role, specifically methylates the guanine in position 2445 (m2G2445) and the guanine in position 2069 (m7G2069) of 23S rRNA. The protein is Ribosomal RNA large subunit methyltransferase K/L of Xylella fastidiosa (strain M12).